The primary structure comprises 30 residues: Rothein 3.3 (30 aa).

At leucine 30 the chain carries Leucine amide.

Expressed by the skin dorsal glands.

The protein resides in the secreted. Functionally, lacks antimicrobial activity. Does not inhibit the formation of NO by neuronal nitric oxide. The chain is Rothein 3.3 from Litoria rothii (Roth's tree frog).